Here is a 691-residue protein sequence, read N- to C-terminus: Elongation factor G (691 aa).

One can recognise a tr-type G domain in the interval 10 to 284; it reads KMYRNIGIMA…AIVKYLPSPL (275 aa). Residues 19-26, 83-87, and 137-140 contribute to the GTP site; these read AHIDAGKT, DTPGH, and NKMD.

Belongs to the TRAFAC class translation factor GTPase superfamily. Classic translation factor GTPase family. EF-G/EF-2 subfamily.

It is found in the cytoplasm. Catalyzes the GTP-dependent ribosomal translocation step during translation elongation. During this step, the ribosome changes from the pre-translocational (PRE) to the post-translocational (POST) state as the newly formed A-site-bound peptidyl-tRNA and P-site-bound deacylated tRNA move to the P and E sites, respectively. Catalyzes the coordinated movement of the two tRNA molecules, the mRNA and conformational changes in the ribosome. This is Elongation factor G from Clostridium tetani (strain Massachusetts / E88).